The sequence spans 137 residues: Large ribosomal subunit protein uL16 (137 aa).

The protein belongs to the universal ribosomal protein uL16 family. As to quaternary structure, part of the 50S ribosomal subunit.

Functionally, binds 23S rRNA and is also seen to make contacts with the A and possibly P site tRNAs. The sequence is that of Large ribosomal subunit protein uL16 from Rhizobium rhizogenes (strain K84 / ATCC BAA-868) (Agrobacterium radiobacter).